The sequence spans 955 residues: UvrABC system protein A (955 aa).

35 to 42 contributes to the ATP binding site; the sequence is GLSGSGKS. 2 consecutive ABC transporter domains span residues 322-601 and 621-951; these read WGST…EESI and GHDN…RYLK. 654-661 lines the ATP pocket; that stretch reads GVSGSGKS. Residues 754–780 form a C4-type zinc finger; it reads CEACQGDGLIKIEMHFLPDVYVKCDIC.

It belongs to the ABC transporter superfamily. UvrA family. As to quaternary structure, forms a heterotetramer with UvrB during the search for lesions.

The protein resides in the cytoplasm. Functionally, the UvrABC repair system catalyzes the recognition and processing of DNA lesions. UvrA is an ATPase and a DNA-binding protein. A damage recognition complex composed of 2 UvrA and 2 UvrB subunits scans DNA for abnormalities. When the presence of a lesion has been verified by UvrB, the UvrA molecules dissociate. This is UvrABC system protein A from Rickettsia felis (strain ATCC VR-1525 / URRWXCal2) (Rickettsia azadi).